A 233-amino-acid polypeptide reads, in one-letter code: Lectin (233 aa).

N-linked (GlcNAc...) asparagine glycans are attached at residues Asn-26 and Asn-108. 2 residues coordinate Mn(2+): Glu-118 and Asp-120. Residues Asp-120, Trp-122, Asn-124, and Glu-129 each contribute to the Ca(2+) site. Positions 129 and 134 each coordinate Mn(2+).

This sequence belongs to the leguminous lectin family. In terms of assembly, monomer.

It localises to the secreted. Its function is as follows. Has metal-independent hemagglutinating activity towards erythrocytes from rabbit and human. Hemagglutinating activity is inhibited by glycoproteins fetuin, asialo-fetuin, thyroglobulin and azocasein but not by free carbohydrates. Inhibits ADP- and epinephrin-induced but not collagen-, fibrinogen, thrombin- or arachidonic acid-induced platelet aggregation in vitro. Has anticoagulant activity in vitro. The polypeptide is Lectin (Bauhinia forficata (Brazilian orchid-tree)).